Reading from the N-terminus, the 373-residue chain is Chaperone protein DnaJ (373 aa).

A J domain is found at 5–70 (DYYEVLGLQK…EKKSNYDQFG (66 aa)). A CR-type zinc finger spans residues 132–214 (GVEKEITVNR…CRGNGNVRKT (83 aa)). Zn(2+) contacts are provided by C145, C148, C162, C165, C188, C191, C202, and C205. 4 CXXCXGXG motif repeats span residues 145–152 (CEHCNGSG), 162–169 (CPTCSGTG), 188–195 (CDRCSGTG), and 202–209 (CTHCRGNG).

It belongs to the DnaJ family. As to quaternary structure, homodimer. Zn(2+) is required as a cofactor.

The protein localises to the cytoplasm. Functionally, participates actively in the response to hyperosmotic and heat shock by preventing the aggregation of stress-denatured proteins and by disaggregating proteins, also in an autonomous, DnaK-independent fashion. Unfolded proteins bind initially to DnaJ; upon interaction with the DnaJ-bound protein, DnaK hydrolyzes its bound ATP, resulting in the formation of a stable complex. GrpE releases ADP from DnaK; ATP binding to DnaK triggers the release of the substrate protein, thus completing the reaction cycle. Several rounds of ATP-dependent interactions between DnaJ, DnaK and GrpE are required for fully efficient folding. Also involved, together with DnaK and GrpE, in the DNA replication of plasmids through activation of initiation proteins. The protein is Chaperone protein DnaJ of Clostridium botulinum (strain Eklund 17B / Type B).